Consider the following 739-residue polypeptide: Phosphoribosylformylglycinamidine synthase subunit PurL (739 aa).

Histidine 52 is an active-site residue. Residues tyrosine 55 and lysine 94 each contribute to the ATP site. Glutamate 96 contributes to the Mg(2+) binding site. Substrate-binding positions include 97–100 and arginine 119; that span reads SHNH. Histidine 98 serves as the catalytic Proton acceptor. A Mg(2+)-binding site is contributed by aspartate 120. Glutamine 243 is a binding site for substrate. Mg(2+) is bound at residue aspartate 273. 317–319 is a binding site for substrate; that stretch reads ESQ. Positions 500 and 537 each coordinate ATP. Asparagine 538 contributes to the Mg(2+) binding site. Serine 540 contacts substrate.

The protein belongs to the FGAMS family. As to quaternary structure, monomer. Part of the FGAM synthase complex composed of 1 PurL, 1 PurQ and 2 PurS subunits.

It is found in the cytoplasm. The catalysed reaction is N(2)-formyl-N(1)-(5-phospho-beta-D-ribosyl)glycinamide + L-glutamine + ATP + H2O = 2-formamido-N(1)-(5-O-phospho-beta-D-ribosyl)acetamidine + L-glutamate + ADP + phosphate + H(+). The protein operates within purine metabolism; IMP biosynthesis via de novo pathway; 5-amino-1-(5-phospho-D-ribosyl)imidazole from N(2)-formyl-N(1)-(5-phospho-D-ribosyl)glycinamide: step 1/2. Functionally, part of the phosphoribosylformylglycinamidine synthase complex involved in the purines biosynthetic pathway. Catalyzes the ATP-dependent conversion of formylglycinamide ribonucleotide (FGAR) and glutamine to yield formylglycinamidine ribonucleotide (FGAM) and glutamate. The FGAM synthase complex is composed of three subunits. PurQ produces an ammonia molecule by converting glutamine to glutamate. PurL transfers the ammonia molecule to FGAR to form FGAM in an ATP-dependent manner. PurS interacts with PurQ and PurL and is thought to assist in the transfer of the ammonia molecule from PurQ to PurL. This chain is Phosphoribosylformylglycinamidine synthase subunit PurL, found in Enterococcus faecalis (strain ATCC 700802 / V583).